The primary structure comprises 778 residues: uncharacterized protein (778 aa).

The region spanning 1 to 92 (MSFVIAVPEA…GARSYVVAEA (92 aa)) is the PE domain. Disordered regions lie at residues 125–163 (ADGT…AGLI), 372–510 (TGLA…GDAF), and 718–778 (QGGL…GADG). Gly residues-rich tracts occupy residues 402–429 (NQTG…GGLG), 436–510 (DGTG…GDAF), and 718–763 (QGGL…GSSG).

It belongs to the mycobacterial PE family. PGRS subfamily.

This is an uncharacterized protein from Mycobacterium tuberculosis (strain CDC 1551 / Oshkosh).